We begin with the raw amino-acid sequence, 209 residues long: Ribosome maturation factor RimP (209 aa).

This sequence belongs to the RimP family.

It localises to the cytoplasm. Its function is as follows. Required for maturation of 30S ribosomal subunits. This Bartonella bacilliformis (strain ATCC 35685 / KC583 / Herrer 020/F12,63) protein is Ribosome maturation factor RimP.